A 146-amino-acid polypeptide reads, in one-letter code: 3-dehydroquinate dehydratase (146 aa).

The active-site Proton acceptor is the Tyr23. Substrate contacts are provided by Asn75, His81, and Asp88. The active-site Proton donor is His101. Substrate is bound by residues Leu102–Ser103 and Arg112.

Belongs to the type-II 3-dehydroquinase family. Homododecamer.

It carries out the reaction 3-dehydroquinate = 3-dehydroshikimate + H2O. Its pathway is metabolic intermediate biosynthesis; chorismate biosynthesis; chorismate from D-erythrose 4-phosphate and phosphoenolpyruvate: step 3/7. Functionally, catalyzes a trans-dehydration via an enolate intermediate. This Marinobacter nauticus (strain ATCC 700491 / DSM 11845 / VT8) (Marinobacter aquaeolei) protein is 3-dehydroquinate dehydratase.